Here is a 393-residue protein sequence, read N- to C-terminus: Dual specificity mitogen-activated protein kinase kinase 1 (393 aa).

The disordered stretch occupies residues 1 to 26 (MPKKKPTPIQLNPTPDGSAVNGTSSA). Residues 9 to 26 (IQLNPTPDGSAVNGTSSA) show a composition bias toward polar residues. The 294-residue stretch at 68–361 (FEKISELGAG…LKQLLVHAFI (294 aa)) folds into the Protein kinase domain. Residues 74–82 (LGAGNGGVV) and Lys-97 each bind ATP. The active-site Proton acceptor is Asp-190. Phosphoserine; by RAF occurs at positions 218 and 222. Residues 270–307 (ELELLFGCQVEGDAAETPPRPRTPGRPLSSYGMDSRPP) form an RAF1-binding region. The residue at position 286 (Thr-286) is a Phosphothreonine. The residue at position 292 (Thr-292) is a Phosphothreonine; by MAPK1. Position 298 is a phosphoserine; by PAK (Ser-298).

Belongs to the protein kinase superfamily. STE Ser/Thr protein kinase family. MAP kinase kinase subfamily. In terms of assembly, found in a complex with at least BRAF, HRAS, MAP2K1, MAPK3/ERK1 and RGS14. Forms a heterodimer with MAP2K2/MEK2. Forms heterodimers with KSR2 which further dimerize to form tetramers. Interacts with KSR1 or KSR2 and BRAF; the interaction with KSR1 or KSR2 mediates KSR1-BRAF or KSR2-BRAF dimerization. Interacts with ARBB2, LAMTOR3, MAPK1/ERK2 and RAF1. Interacts with MAPK1/ERK2. Interacts with MORG1. Interacts with PPARG. Interacts with isoform 1 of VRK2. Interacts with SGK1. Interacts with BIRC6/bruce. Interacts with KAT7; the interaction promotes KAT7 phosphorylation. Interacts with RAF1 and NEK10; the interaction is required for ERK1/2-signaling pathway activation in response to UV irradiation. Interacts with TRAF3IP3. Interacts with MOS. In terms of processing, phosphorylation at Ser-218 and Ser-222 by MAP kinase kinase kinases (BRAF or MEKK1) positively regulates the kinase activity. Also phosphorylated at Thr-292 by MAPK1/ERK2 and at Ser-298 by PAK. MAPK1/ERK2 phosphorylation of Thr-292 occurs in response to cellular adhesion and leads to inhibition of Ser-298 phosphorylation by PAK. Autophosphorylated at Ser-218 and Ser-222, autophosphosphorylation is promoted by NEK10 following UV irradiation.

The protein resides in the cytoplasm. It is found in the cytoskeleton. Its subcellular location is the microtubule organizing center. The protein localises to the centrosome. It localises to the spindle pole body. The protein resides in the nucleus. It is found in the membrane. The catalysed reaction is L-seryl-[protein] + ATP = O-phospho-L-seryl-[protein] + ADP + H(+). The enzyme catalyses L-threonyl-[protein] + ATP = O-phospho-L-threonyl-[protein] + ADP + H(+). It carries out the reaction L-tyrosyl-[protein] + ATP = O-phospho-L-tyrosyl-[protein] + ADP + H(+). Its activity is regulated as follows. Ras proteins such as HRAS mediate the activation of RAF proteins such as RAF1 or BRAF which in turn activate extracellular signal-regulated kinases (ERK) through MAPK (mitogen-activated protein kinases) and ERK kinases MAP2K1/MEK1 and MAP2K2/MEK2. Activation occurs through phosphorylation of Ser-218 and Ser-222. MAP2K1/MEK1 binds KSR1 or KSR2 releasing the inhibitory intramolecular interaction between KSR1 or KSR2 protein kinase and N-terminal domains. This allows KSR1 or KSR2 dimerization with BRAF leading to BRAF activation and phosphorylation of MAP2K1. MAP2K1/MEK1 is also the target of negative feed-back regulation by its substrate kinases, such as MAPK1/ERK2. These phosphorylate MAP2K1/MEK1 on Thr-292, thereby facilitating dephosphorylation of the activating residues Ser-218 and Ser-222. Inhibited by serine/threonine phosphatase 2A. Its function is as follows. Dual specificity protein kinase which acts as an essential component of the MAP kinase signal transduction pathway. Binding of extracellular ligands such as growth factors, cytokines and hormones to their cell-surface receptors activates RAS and this initiates RAF1 activation. RAF1 then further activates the dual-specificity protein kinases MAP2K1/MEK1 and MAP2K2/MEK2. Both MAP2K1/MEK1 and MAP2K2/MEK2 function specifically in the MAPK/ERK cascade, and catalyze the concomitant phosphorylation of a threonine and a tyrosine residue in a Thr-Glu-Tyr sequence located in the extracellular signal-regulated kinases MAPK3/ERK1 and MAPK1/ERK2, leading to their activation and further transduction of the signal within the MAPK/ERK cascade. Activates BRAF in a KSR1 or KSR2-dependent manner; by binding to KSR1 or KSR2 releases the inhibitory intramolecular interaction between KSR1 or KSR2 protein kinase and N-terminal domains which promotes KSR1 or KSR2-BRAF dimerization and BRAF activation. Depending on the cellular context, this pathway mediates diverse biological functions such as cell growth, adhesion, survival and differentiation, predominantly through the regulation of transcription, metabolism and cytoskeletal rearrangements. One target of the MAPK/ERK cascade is peroxisome proliferator-activated receptor gamma (PPARG), a nuclear receptor that promotes differentiation and apoptosis. MAP2K1/MEK1 has been shown to export PPARG from the nucleus. The MAPK/ERK cascade is also involved in the regulation of endosomal dynamics, including lysosome processing and endosome cycling through the perinuclear recycling compartment (PNRC), as well as in the fragmentation of the Golgi apparatus during mitosis. The chain is Dual specificity mitogen-activated protein kinase kinase 1 (MAP2K1) from Cricetulus griseus (Chinese hamster).